Reading from the N-terminus, the 512-residue chain is D-alanine--D-alanyl carrier protein ligase (512 aa).

152–153 (TS) is a binding site for ATP. Asp199 serves as a coordination point for D-alanine. 294–299 (NAYGPT) is an ATP binding site. Val303 serves as a coordination point for D-alanine. ATP-binding positions include Asp385, 397–400 (YGGR), and Lys499. Residue Lys499 coordinates D-alanine.

The protein belongs to the ATP-dependent AMP-binding enzyme family. DltA subfamily.

It localises to the cytoplasm. The catalysed reaction is holo-[D-alanyl-carrier protein] + D-alanine + ATP = D-alanyl-[D-alanyl-carrier protein] + AMP + diphosphate. It functions in the pathway cell wall biogenesis; lipoteichoic acid biosynthesis. Catalyzes the first step in the D-alanylation of lipoteichoic acid (LTA), the activation of D-alanine and its transfer onto the D-alanyl carrier protein (Dcp) DltC. In an ATP-dependent two-step reaction, forms a high energy D-alanyl-AMP intermediate, followed by transfer of the D-alanyl residue as a thiol ester to the phosphopantheinyl prosthetic group of the Dcp. D-alanylation of LTA plays an important role in modulating the properties of the cell wall in Gram-positive bacteria, influencing the net charge of the cell wall. In Streptococcus pyogenes serotype M18 (strain MGAS8232), this protein is D-alanine--D-alanyl carrier protein ligase.